The primary structure comprises 84 residues: Cryptic plasmid protein A (84 aa).

The polypeptide is Cryptic plasmid protein A (cppA) (Neisseria gonorrhoeae).